We begin with the raw amino-acid sequence, 453 residues long: Phosphoglucosamine mutase (453 aa).

Residue Ser-108 is the Phosphoserine intermediate of the active site. Mg(2+) contacts are provided by Ser-108, Asp-247, Asp-249, and Asp-251. Ser-108 is subject to Phosphoserine.

It belongs to the phosphohexose mutase family. It depends on Mg(2+) as a cofactor. Activated by phosphorylation.

The enzyme catalyses alpha-D-glucosamine 1-phosphate = D-glucosamine 6-phosphate. In terms of biological role, catalyzes the conversion of glucosamine-6-phosphate to glucosamine-1-phosphate. The protein is Phosphoglucosamine mutase of Methylobacillus flagellatus (strain ATCC 51484 / DSM 6875 / VKM B-1610 / KT).